The chain runs to 465 residues: Cysteine--tRNA ligase (465 aa).

Zn(2+) is bound at residue C27. The 'HIGH' region signature appears at 29-39 (PTVYNFFHIGN). Zn(2+)-binding residues include C207, H232, and E236. Residues 264-268 (KMSKS) carry the 'KMSKS' region motif. ATP is bound at residue K267.

Belongs to the class-I aminoacyl-tRNA synthetase family. Monomer. Zn(2+) serves as cofactor.

It is found in the cytoplasm. The catalysed reaction is tRNA(Cys) + L-cysteine + ATP = L-cysteinyl-tRNA(Cys) + AMP + diphosphate. This Clostridium botulinum (strain Kyoto / Type A2) protein is Cysteine--tRNA ligase.